The chain runs to 171 residues: ATP synthase subunit b (171 aa).

The helical transmembrane segment at 14–34 (LGDMLFIGISFIVLMALISVV) threads the bilayer. Residues 56 to 97 (SAQKSRQEASDLADQRRDALSHSRAEASEIVADAKKSGEKQR) are compositionally biased toward basic and acidic residues. The interval 56 to 104 (SAQKSRQEASDLADQRRDALSHSRAEASEIVADAKKSGEKQRSSIVADA) is disordered.

It belongs to the ATPase B chain family. F-type ATPases have 2 components, F(1) - the catalytic core - and F(0) - the membrane proton channel. F(1) has five subunits: alpha(3), beta(3), gamma(1), delta(1), epsilon(1). F(0) has three main subunits: a(1), b(2) and c(10-14). The alpha and beta chains form an alternating ring which encloses part of the gamma chain. F(1) is attached to F(0) by a central stalk formed by the gamma and epsilon chains, while a peripheral stalk is formed by the delta and b chains.

The protein localises to the cell membrane. Functionally, f(1)F(0) ATP synthase produces ATP from ADP in the presence of a proton or sodium gradient. F-type ATPases consist of two structural domains, F(1) containing the extramembraneous catalytic core and F(0) containing the membrane proton channel, linked together by a central stalk and a peripheral stalk. During catalysis, ATP synthesis in the catalytic domain of F(1) is coupled via a rotary mechanism of the central stalk subunits to proton translocation. In terms of biological role, component of the F(0) channel, it forms part of the peripheral stalk, linking F(1) to F(0). This Lactiplantibacillus plantarum (strain ATCC BAA-793 / NCIMB 8826 / WCFS1) (Lactobacillus plantarum) protein is ATP synthase subunit b.